A 514-amino-acid chain; its full sequence is Beta-galactoside alpha-2,6-sialyltransferase 2 (514 aa).

Residues 1–10 (MKSSLKQWRR) are Cytoplasmic-facing. Residues 11–31 (LALGLILVWALLFLALLSYFM) traverse the membrane as a helical; Signal-anchor for type II membrane protein segment. Over 32 to 514 (ESRVDDPHAA…PGFNKVHCEP (483 aa)) the chain is Lumenal. Residues 70-92 (ATSSAPSTSSNTQQEQSQEENPS) are compositionally biased toward low complexity. Residues 70-183 (ATSSAPSTSS…TKRVARHGSS (114 aa)) are disordered. The span at 119-132 (FGTQDVGSRSTGVS) shows a compositional bias: polar residues. Acidic residues predominate over residues 145 to 166 (PQEDEDEEEEVIGGEEEDEEGG). Cystine bridges form between Cys246–Cys512, Cys289–Cys441, and Cys459–Cys470. N-linked (GlcNAc...) asparagine glycans are attached at residues Asn330, Asn350, and Asn357.

This sequence belongs to the glycosyltransferase 29 family.

It is found in the golgi apparatus. The protein localises to the golgi stack membrane. The enzyme catalyses a beta-D-galactoside + CMP-N-acetyl-beta-neuraminate = an N-acetyl-alpha-neuraminyl-(2-&gt;6)-beta-D-galactosyl derivative + CMP + H(+). Its function is as follows. Transfers sialic acid from the donor of substrate CMP-sialic acid to galactose containing acceptor substrates. The sequence is that of Beta-galactoside alpha-2,6-sialyltransferase 2 (st6gal2) from Danio rerio (Zebrafish).